The chain runs to 426 residues: tRNA(Ile)-lysidine synthase (426 aa).

ATP is bound at residue 27–32 (SGGADS).

It belongs to the tRNA(Ile)-lysidine synthase family.

It is found in the cytoplasm. The enzyme catalyses cytidine(34) in tRNA(Ile2) + L-lysine + ATP = lysidine(34) in tRNA(Ile2) + AMP + diphosphate + H(+). Functionally, ligates lysine onto the cytidine present at position 34 of the AUA codon-specific tRNA(Ile) that contains the anticodon CAU, in an ATP-dependent manner. Cytidine is converted to lysidine, thus changing the amino acid specificity of the tRNA from methionine to isoleucine. The chain is tRNA(Ile)-lysidine synthase from Bacteroides thetaiotaomicron (strain ATCC 29148 / DSM 2079 / JCM 5827 / CCUG 10774 / NCTC 10582 / VPI-5482 / E50).